We begin with the raw amino-acid sequence, 175 residues long: Large ribosomal subunit protein uL18 (175 aa).

The protein belongs to the universal ribosomal protein uL18 family. As to quaternary structure, part of the 50S ribosomal subunit. Contacts the 5S and 23S rRNAs.

This is one of the proteins that bind and probably mediate the attachment of the 5S RNA into the large ribosomal subunit, where it forms part of the central protuberance. This chain is Large ribosomal subunit protein uL18, found in Methanospirillum hungatei JF-1 (strain ATCC 27890 / DSM 864 / NBRC 100397 / JF-1).